Reading from the N-terminus, the 395-residue chain is Elongation factor Tu (395 aa).

Residues 10 to 204 enclose the tr-type G domain; sequence KPHVNIGTIG…TVDEYIPTPQ (195 aa). Positions 19–26 are G1; the sequence is GHVDHGKT. 19 to 26 provides a ligand contact to GTP; sequence GHVDHGKT. Threonine 26 contacts Mg(2+). Residues 60–64 are G2; sequence GITIN. The G3 stretch occupies residues 81–84; that stretch reads DAPG. GTP is bound by residues 81–85 and 136–139; these read DAPGH and NKCD. Residues 136–139 form a G4 region; the sequence is NKCD. The G5 stretch occupies residues 174-176; the sequence is SAL.

It belongs to the TRAFAC class translation factor GTPase superfamily. Classic translation factor GTPase family. EF-Tu/EF-1A subfamily. Monomer.

Its subcellular location is the cytoplasm. The catalysed reaction is GTP + H2O = GDP + phosphate + H(+). Its function is as follows. GTP hydrolase that promotes the GTP-dependent binding of aminoacyl-tRNA to the A-site of ribosomes during protein biosynthesis. In Ligilactobacillus salivarius (strain UCC118) (Lactobacillus salivarius), this protein is Elongation factor Tu.